The sequence spans 193 residues: Endoribonuclease YbeY (193 aa).

The Zn(2+) site is built by H109, H113, and H119. Positions 143-193 (GAALREGRREGRAGEAKDRWTRSPTSISTPSRSGSTARGSRAKTSRAGSRT) are disordered. Residues 147–163 (REGRREGRAGEAKDRWT) show a composition bias toward basic and acidic residues. Residues 164–181 (RSPTSISTPSRSGSTARG) are compositionally biased toward low complexity.

This sequence belongs to the endoribonuclease YbeY family. Zn(2+) serves as cofactor.

The protein localises to the cytoplasm. Its function is as follows. Single strand-specific metallo-endoribonuclease involved in late-stage 70S ribosome quality control and in maturation of the 3' terminus of the 16S rRNA. The sequence is that of Endoribonuclease YbeY from Anaeromyxobacter dehalogenans (strain 2CP-C).